A 483-amino-acid polypeptide reads, in one-letter code: MIQVLLVTLCLAAFPYQGNSIILESGNVNDYEVLYPQKVTALPKGAVQPKYEDTMQYEFKVNGEPVVLHLEKNKGLFSKDYSETHYSSDGRKITTNPPVEDHCYYHGRIQNDADSTASISACNGLKGHFKLQGETYLIEPLKLSDSEAHAVYKYENVEKGDEAPKMCGVTQTNWKSDKPIKKASQLNLTPEQQRFPQRYIELVVVADHRMFTKYNGNLNTIRIWVHELVNTMNVFYRPLNIHVSLTDLEVWSDQDLINVQPAAADTLEAFGDWRETVLLNRISHDNAQLLTAIELDGETIGLANRGTMCDPKLSTGIVQDHSAINLWVAVTMAHEMGHNLGISHDGNQCHCDANSCIMSEELRQQLSFEFSDCSQNQYQTFLTDHNPQCMLNEPLRTDIVSTPVSGNELWETGEESDFDAPANPCCDAETCKLRPGAQCAEGLCCDQCKFMKEGTVCHRAKGDDLDDYCNGISAGCPRNPFHA.

Residues 1 to 20 form the signal peptide; it reads MIQVLLVTLCLAAFPYQGNS. The propeptide occupies 21 to 191; sequence IILESGNVND…KASQLNLTPE (171 aa). Positions 198–394 constitute a Peptidase M12B domain; that stretch reads RYIELVVVAD…HNPQCMLNEP (197 aa). The Ca(2+) site is built by glutamate 201 and aspartate 285. 3 disulfide bridges follow: cysteine 309–cysteine 389, cysteine 349–cysteine 373, and cysteine 351–cysteine 356. Histidine 334 is a binding site for Zn(2+). Glutamate 335 is an active-site residue. Zn(2+)-binding residues include histidine 338 and histidine 344. Residues cysteine 389 and asparagine 392 each contribute to the Ca(2+) site. Positions 395-414 are excised as a propeptide; it reads LRTDIVSTPVSGNELWETGE. Residues 402–483 form the Disintegrin domain; that stretch reads TPVSGNELWE…AGCPRNPFHA (82 aa). 4 cysteine pairs are disulfide-bonded: cysteine 425–cysteine 448, cysteine 439–cysteine 445, cysteine 444–cysteine 469, and cysteine 457–cysteine 476. Positions 461–463 match the Cell attachment site; atypical (KGD) motif; sequence KGD.

Belongs to the venom metalloproteinase (M12B) family. P-II subfamily. P-IIe sub-subfamily. As to quaternary structure, heterodimer; disulfide-linked (disintegrin). The cofactor is Zn(2+). As to expression, expressed by the venom gland.

It is found in the secreted. Its activity is regulated as follows. Inhibited by EDTA and 1,10-phenanthroline, but not by PMSF. In terms of biological role, has fibrinolytic activity. The recombinant enzyme cleaves both alpha- (FGA) and beta-chains (FGB) of fibrinogen, but not the gamma-chain. The recombinant protein does not produce hemorrhage in mice and does not have effect on ADP- or collagen-stimulated platelet aggregation. Its function is as follows. Inhibits platelet aggregation induced by ADP, thrombin, platelet-activating factor and collagen. Acts by inhibiting fibrinogen interaction with platelet receptors GPIIb/GPIIIa (ITGA2B/ITGB3). The polypeptide is Zinc metalloproteinase/disintegrin VMP-II (Agkistrodon piscivorus leucostoma (Western cottonmouth)).